The sequence spans 378 residues: Chaperone protein DnaJ (378 aa).

Residues 5 to 70 (DYYEVLSVGR…DKKAAYDQFG (66 aa)) form the J domain. The segment at 133 to 211 (GLTKELRIPT…CHGEGRVEKS (79 aa)) adopts a CR-type zinc-finger fold. Zn(2+) contacts are provided by Cys-146, Cys-149, Cys-163, Cys-166, Cys-185, Cys-188, Cys-199, and Cys-202. CXXCXGXG motif repeat units lie at residues 146 to 153 (CDTCDGSG), 163 to 170 (CGTCHGQG), 185 to 192 (CPTCHGRG), and 199 to 206 (CNSCHGEG).

The protein belongs to the DnaJ family. In terms of assembly, homodimer. Zn(2+) serves as cofactor.

Its subcellular location is the cytoplasm. Its function is as follows. Participates actively in the response to hyperosmotic and heat shock by preventing the aggregation of stress-denatured proteins and by disaggregating proteins, also in an autonomous, DnaK-independent fashion. Unfolded proteins bind initially to DnaJ; upon interaction with the DnaJ-bound protein, DnaK hydrolyzes its bound ATP, resulting in the formation of a stable complex. GrpE releases ADP from DnaK; ATP binding to DnaK triggers the release of the substrate protein, thus completing the reaction cycle. Several rounds of ATP-dependent interactions between DnaJ, DnaK and GrpE are required for fully efficient folding. Also involved, together with DnaK and GrpE, in the DNA replication of plasmids through activation of initiation proteins. This Shewanella woodyi (strain ATCC 51908 / MS32) protein is Chaperone protein DnaJ.